We begin with the raw amino-acid sequence, 490 residues long: Colicin-5 (490 aa).

A compositionally biased stretch (polar residues) spans 1–20 (MDKVTDNSPDVESTESTEGS). 2 disordered regions span residues 1–29 (MDKVTDNSPDVESTESTEGSFPTVGVDTG) and 146–171 (QKAREEAEAAEKALREAERQRDEIAR). The segment covering 146–170 (QKAREEAEAAEKALREAERQRDEIA) has biased composition (basic and acidic residues). A helical membrane pass occupies residues 447–467 (IVALMFSFIVGVPLGFWGIAI).

The protein belongs to the channel forming colicin family.

It is found in the host membrane. Functionally, this colicin is a channel-forming colicin. This class of transmembrane toxins depolarize the cytoplasmic membrane, leading to dissipation of cellular energy. In terms of biological role, colicins are polypeptide toxins produced by and active against E.coli and closely related bacteria. This is Colicin-5 (cfa) from Escherichia coli.